The following is a 137-amino-acid chain: Cytochrome c2 (137 aa).

The signal sequence occupies residues 1–21 (MKISLTAATVAALVLAAPAFA). Heme c contacts are provided by Cys-34, Cys-37, His-38, and Met-117.

Belongs to the cytochrome c family. In terms of processing, binds 1 heme c group covalently per subunit.

Functionally, cytochrome c2 is found mainly in purple, non-sulfur, photosynthetic bacteria where it functions as the electron donor to the oxidized bacteriochlorophyll in the photophosphorylation pathway. However, it may also have a role in the respiratory chain and is found in some non-photosynthetic bacteria. In Rhodobacter capsulatus (strain ATCC BAA-309 / NBRC 16581 / SB1003), this protein is Cytochrome c2 (cycA).